A 1222-amino-acid polypeptide reads, in one-letter code: MLFNINEKGEPLVISFAPFLSPEAIKYLQENERCSDQSQKRTAQQIEAIYTSGQNILVSASAGSGKTFVMVERILDKILRGVSIDRLFISTFTVKAATELRERIENKLYSQIAQTTDFQMKVYLTEQLQSLCQADIGTMDAFAQKVVSRYGYSIGISSQFRIMQDKAEQDVLKQEVFSKLFSEFMNQKEAPVFRALVKNFSGNCKDTSAFRELVYTCYSFSQSTENPKIWLQENFLSAAKTYQRLEDIPDHDIELLLLAMQDTANQLRDVTDMEDYGQLTKAGSRSAKYTKHLTIIEKLSDWVRDFKCLYGKAGLDRLIRDVTGLIPSGNDVTVSKVKYPVFKTLHQKLKQFRHLETILMYQKDCFPLLEQLQDFVLAFSEAYLAVKIQESAFEFSDIAHFAIKILEENTDIRQSYQQHYHEVMVDEYQDNNHMQERLLTLLSNGHNRFMVGDIKQSIYRFRQADPQIFNQKFRDYQKKPEQGKVILLKENFRSQSEVLNVSNAVFSHLMDESVGDVLYDEQHQLIAGSHAQTVPYLDRRAQLLLYNSDKDDGNAPSDSEGISFSEVTIVAKEIIKLHNDKGVPFEDITLLVSSRTRNDIISHTFNQYGIPIVTDGGQQNYLKSVEVMVMLDTLRTINNPRNDYALVALLRSPMFAFDEDDLARIALQKDNELDKDCLYDKIQRAVIGRGAHPELIHDTLLGKLNVFLKTLKSWRRYAKLGSLYDLIWKIFNDRFYFDFVASQAKAEQAQANLYALALRANQFEKSGYKGLYRFIKMIDKVLETQNDLADVEVAAPKQAVNLMTIHKSKGLQFPYVFILNCDKRFSMTDIHKSFILNRQHGIGIKYLADIKGLLGETTLNSVKVSMETLPYQLNKQELRLATLSEQMRLLYVAMTRAEKKVYFIGKASKSKSQEITDPKKLGKLLPLALREQLLTFQDWLLAIADIFSTEDLYFDVRFIEDSDLTQESVGRLQTPQLLNPDDLKDNRQSETIARALDMLEAVSQLNANYEAAIHLPTVRTPSQLKATYEPLLEPIGVDIIEKSSRSLSDFTLPHFSKKAKVEASHIGSALHQLMQVLPLSKPINQQTLLDALRGIDSNEEVKTALDLKKIESFFCDTSLGQFFQTYQKHLYREAPFAILKLDPISQEEYVLRGIIDAYFLFDDHIVLVDYKTDKYKQPIELKKRYQQQLELYAEALTQTYKLPVTKRYLVLMGGGKPEIVEV.

The 457-residue stretch at 39 to 495 (QKRTAQQIEA…ILLKENFRSQ (457 aa)) folds into the UvrD-like helicase ATP-binding domain. An ATP-binding site is contributed by 60-67 (ASAGSGKT). In terms of domain architecture, UvrD-like helicase C-terminal spans 524–810 (QLIAGSHAQT…NLMTIHKSKG (287 aa)).

It belongs to the helicase family. AddA subfamily. In terms of assembly, heterodimer of AddA and AddB/RexB. It depends on Mg(2+) as a cofactor.

The enzyme catalyses Couples ATP hydrolysis with the unwinding of duplex DNA by translocating in the 3'-5' direction.. The catalysed reaction is ATP + H2O = ADP + phosphate + H(+). Functionally, the heterodimer acts as both an ATP-dependent DNA helicase and an ATP-dependent, dual-direction single-stranded exonuclease. Recognizes the chi site generating a DNA molecule suitable for the initiation of homologous recombination. The AddA nuclease domain is required for chi fragment generation; this subunit has the helicase and 3' -&gt; 5' nuclease activities. In Streptococcus pyogenes serotype M6 (strain ATCC BAA-946 / MGAS10394), this protein is ATP-dependent helicase/nuclease subunit A.